We begin with the raw amino-acid sequence, 152 residues long: Deoxyuridine 5'-triphosphate nucleotidohydrolase (152 aa).

Residues 71 to 73, asparagine 84, 88 to 90, and methionine 98 each bind substrate; these read RSG and LID.

Belongs to the dUTPase family. Mg(2+) serves as cofactor.

The enzyme catalyses dUTP + H2O = dUMP + diphosphate + H(+). It functions in the pathway pyrimidine metabolism; dUMP biosynthesis; dUMP from dCTP (dUTP route): step 2/2. Its function is as follows. This enzyme is involved in nucleotide metabolism: it produces dUMP, the immediate precursor of thymidine nucleotides and it decreases the intracellular concentration of dUTP so that uracil cannot be incorporated into DNA. The chain is Deoxyuridine 5'-triphosphate nucleotidohydrolase from Shewanella sediminis (strain HAW-EB3).